Consider the following 595-residue polypeptide: Arginine--tRNA ligase (595 aa).

The short motif at 132-142 (ANPTGPLHVGH) is the 'HIGH' region element.

It belongs to the class-I aminoacyl-tRNA synthetase family. As to quaternary structure, monomer.

Its subcellular location is the cytoplasm. It carries out the reaction tRNA(Arg) + L-arginine + ATP = L-arginyl-tRNA(Arg) + AMP + diphosphate. This Cupriavidus pinatubonensis (strain JMP 134 / LMG 1197) (Cupriavidus necator (strain JMP 134)) protein is Arginine--tRNA ligase.